Consider the following 255-residue polypeptide: Type III pantothenate kinase (255 aa).

6-13 lines the ATP pocket; sequence DVGNTNIV. Substrate-binding positions include Tyr-100 and 107–110; that span reads GADR. The active-site Proton acceptor is Asp-109. Position 129 (Asp-129) interacts with K(+). Thr-132 provides a ligand contact to ATP. Thr-184 lines the substrate pocket.

The protein belongs to the type III pantothenate kinase family. Homodimer. NH4(+) is required as a cofactor. The cofactor is K(+).

Its subcellular location is the cytoplasm. The enzyme catalyses (R)-pantothenate + ATP = (R)-4'-phosphopantothenate + ADP + H(+). Its pathway is cofactor biosynthesis; coenzyme A biosynthesis; CoA from (R)-pantothenate: step 1/5. Its function is as follows. Catalyzes the phosphorylation of pantothenate (Pan), the first step in CoA biosynthesis. The polypeptide is Type III pantothenate kinase (Thermoanaerobacter sp. (strain X514)).